A 643-amino-acid chain; its full sequence is MTLTLSVLICLGLNVGPRTCVQAGTLPKPTLWAEPASVIARGKPVTLWCQGPLETEEYRLDKEGLPWAWERQNPLEPGAKAKFHILSTVYDSAGRYRCYYETPAGWSEPSDPLELVATGFYAEPTLLALPSPVVASGGNVTLQCDTRDGLLTFVLVEEEQKLPRTLYSQKLPKGPSRALFPVGPVTPSFRWRFRCYYYYRKNPQVWSHPSDLLEILVPGVSRKPSLLIPQGSVVARGGSLTLQCRSDVGYDRFVLYKEGGHDLVQGSGQQPQAGLSQANFTLSPVSRSYGGQYRCYGAHNLSPRWSAPSDPLDILIAGLIPDRPSLSVQPGPTVASGENVTLLCQSWRQIDTFFLTKEGAAHPPLCLKSKYQFYKYQAEFSMSPVTSARGGTYRCYSAIRSYPHLLSSPSYPLELVVSGPSGDPSLSPTGSTPTPGPEDQPLTPTGLDPQSGLGRHLGVVTGVSVAFVLLLFLLLFLLLRHRHQSKHRTSAHFYRPAGAAGPEPKDQVLQKRASPVADTQEEILNAAVKDTQPKDGAEMDARQSPRDEDPQAVTYAEVKHSRPRREMASPPSPLSGEFLDTKDTQAEEDRQMDTQAAASEAPQDVTYAQLHSLTLRREATEPPPSQEREPPAEPSIYAPLAIH.

Positions 1–23 (MTLTLSVLICLGLNVGPRTCVQA) are cleaved as a signal peptide. Residues 24-458 (GTLPKPTLWA…PQSGLGRHLG (435 aa)) lie on the Extracellular side of the membrane. Ig-like C2-type domains are found at residues 27–116 (PKPT…LELV), 111–228 (DPLE…SLLI), 224–313 (PSLL…DPLD), and 337–418 (GENV…LVVS). C49 and C98 are oxidised to a cystine. N-linked (GlcNAc...) asparagine glycosylation is present at N139. 2 disulfide bridges follow: C144-C195 and C244-C295. N279 and N339 each carry an N-linked (GlcNAc...) asparagine glycan. A disulfide bond links C344 and C395. The segment covering 417 to 433 (VSGPSGDPSLSPTGSTP) has biased composition (low complexity). The segment at 417–449 (VSGPSGDPSLSPTGSTPTPGPEDQPLTPTGLDP) is disordered. The helical transmembrane segment at 459 to 479 (VVTGVSVAFVLLLFLLLFLLL) threads the bilayer. Residues 480–643 (RHRHQSKHRT…PSIYAPLAIH (164 aa)) lie on the Cytoplasmic side of the membrane. Residues 493–643 (FYRPAGAAGP…PSIYAPLAIH (151 aa)) form a disordered region. At S514 the chain carries Phosphoserine. 3 stretches are compositionally biased toward basic and acidic residues: residues 531 to 549 (TQPKDGAEMDARQSPRDED), 557 to 567 (EVKHSRPRREM), and 579 to 592 (LDTKDTQAEEDRQM). Residues 605–610 (VTYAQL) carry the ITIM motif 1 motif. Basic and acidic residues predominate over residues 615-631 (LRREATEPPPSQEREPP). Positions 635–640 (SIYAPL) match the ITIM motif 2 motif.

It localises to the membrane. Functionally, may act as receptor for class I MHC antigens. This Pan troglodytes (Chimpanzee) protein is Leukocyte immunoglobulin-like receptor subfamily B member 5 (LILRB5).